The following is a 150-amino-acid chain: Arginine repressor (150 aa).

This sequence belongs to the ArgR family.

The protein localises to the cytoplasm. It functions in the pathway amino-acid biosynthesis; L-arginine biosynthesis [regulation]. Regulates arginine biosynthesis genes. The polypeptide is Arginine repressor (Staphylococcus carnosus (strain TM300)).